The following is a 609-amino-acid chain: MGCLRSLVRRKQFDSSNGKAETHHHHQQLAKALTFPHLIAIGVGSTIGAGVYILVGTVAREHSGPALALSFLIAGISAALSAFCYAELSSRFPSAGSAYHYSYICIGEGVAWLIGWALILEYTIGGSTVARGISPNLAMIFGGEDCLPTILARHQIPGLDIVVDPCAAVLVFIVTGLCCLGVKESTFAQGIVTTANVFVMIFVIVAGSYLCFKTGWVGYELPTGYFPYGVDGMLTGSATVFFAYIGFDTVASMAEEVKNPRRDLPLGIGISLLLCCLLYMMVSVVIVGLVPYYAMDPDTPISSAFSSHGIQWAAYLINLGAVMALCSALMGSILPQPRILMAMARDGLLPSYFSYVNQRTQVPINGTITTGVCAAILAFFMDVSQLAGMVSVGTLVAFTMVAISLLIVRYVVPPDEVPLPSSLQENSSSHVGTSIRSKQPLLGKVDDSVVDKENAPGSWVLNKKNRRKFAGWSIMFTCIGNFLLSYAASSFLLPGLLRYSLCGVGGLFLLVGLIVLICIDQDDARHSFGHSGGFICPFVPLLPIVCILINMYLLVNLGAATWVRVSVWLFLGVVVYIFYGRRNSSLVNAVYVSTAHLQEIRRTSGHSLA.

A mitochondrion-targeting transit peptide spans 1-14 (MGCLRSLVRRKQFD). The next 14 membrane-spanning stretches (helical) occupy residues 38 to 58 (LIAI…VGTV), 66 to 86 (ALAL…FCYA), 104 to 124 (ICIG…EYTI), 161 to 181 (IVVD…CCLG), 190 to 210 (GIVT…GSYL), 226 to 246 (FPYG…AYIG), 270 to 290 (ISLL…VGLV), 314 to 334 (AYLI…GSIL), 361 to 381 (QVPI…AFFM), 388 to 408 (GMVS…LLIV), 474 to 494 (IMFT…FLLP), 499 to 519 (YSLC…LICI), 534 to 554 (FICP…MYLL), and 558 to 578 (GAAT…VYIF).

The protein belongs to the amino acid-polyamine-organocation (APC) superfamily. Cationic amino acid transporter (CAT) (TC 2.A.3.3) family. Expressed in roots, stems, flowers, and leaves.

It is found in the mitochondrion membrane. Functionally, permease involved in the transport of the cationic neutral or acidic amino acids. This Arabidopsis thaliana (Mouse-ear cress) protein is Cationic amino acid transporter 3, mitochondrial (CAT3).